The primary structure comprises 500 residues: MEDSSLPVVPAPIAAPGPAPSATAPRVPFHCSECGKSFRYRSDLRRHFARHTALKPHACPRCGKGFKHSFNLANHLRSHTGERPYRCSACPKGFRDSTGLLHHQVVHTGEKPYCCLVCELRFSSRSSLGRHLKRQHRGTLPSPLQPSPGLPPLSSPCSVCCNVGPCSVCGGGGSSGGEGLEGAGATSWGLAEAAAAAAASLPPFACGACARRFDHGRELAAHWAAHTDVKPFKCPRCERDFNAPALLERHKLTHDLQGSNAPPTQVWASGGGPEVAGEGDASEVGAAPQTWDAGLLLSPTGAGVPKLEALLPGDEGSGNDQAPAAAAEASSEDTLYQCDCGTFFASAPALASHLEAHSGPATYGCGHCGALYAALAALEEHRRASHGEGSGEAAPDGEGNQAAGGPGPGSSSRSKKIFGCSECEKLFRSPRDLERHVLVHTGEKPFPCLECGKFFRHECYLKRHRLLHGTERPFPCHICGKGFITLSNLSRHLKLHRGMD.

Residue Met1 is modified to N-acetylmethionine. The disordered stretch occupies residues 1–24 (MEDSSLPVVPAPIAAPGPAPSATA). Residues 9 to 19 (VPAPIAAPGPA) show a composition bias toward pro residues. C2H2-type zinc fingers lie at residues 29–51 (FHCS…FARH), 57–79 (HACP…LRSH), 85–107 (YRCS…QVVH), 113–136 (YCCL…KRQH), 204–226 (FACG…WAAH), and 232–254 (FKCP…KLTH). 2 disordered regions span residues 255–284 (DLQG…ASEV) and 306–328 (KLEA…AAAE). Residues 256–267 (LQGSNAPPTQVW) are compositionally biased toward polar residues. C2H2-type zinc fingers lie at residues 336-357 (YQCD…LEAH), 363-386 (YGCG…RASH), 418-440 (FGCS…VLVH), 446-468 (FPCL…RLLH), and 474-496 (FPCH…LKLH). A disordered region spans residues 383–415 (RASHGEGSGEAAPDGEGNQAAGGPGPGSSSRSK).

In terms of assembly, interacts with FLT3 cytoplasmic catalytic domain, following receptor stimulation, in a kinase-independent manner. Does not interact with other structurally related receptor tyrosine kinases, including KIT, CSF1R and PDGFR. Interacts with NRL. In terms of tissue distribution, widely expressed. In the retina, highest expression in the ganglion cell layer.

The protein localises to the cytoplasm. Its subcellular location is the nucleus. Its function is as follows. May be a transcriptional repressor of NRL function in photoreceptors. Does not repress CRX-mediated transactivation. This chain is Flt3-interacting zinc finger protein 1 (Fiz1), found in Mus musculus (Mouse).